The primary structure comprises 425 residues: Serine--tRNA ligase (425 aa).

Residue 233–235 participates in L-serine binding; it reads TAE. Residue 264 to 266 participates in ATP binding; it reads RAE. An L-serine-binding site is contributed by Glu-287. Position 351–354 (351–354) interacts with ATP; it reads EISS. An L-serine-binding site is contributed by Ser-387.

It belongs to the class-II aminoacyl-tRNA synthetase family. Type-1 seryl-tRNA synthetase subfamily. Homodimer. The tRNA molecule binds across the dimer.

Its subcellular location is the cytoplasm. It catalyses the reaction tRNA(Ser) + L-serine + ATP = L-seryl-tRNA(Ser) + AMP + diphosphate + H(+). The catalysed reaction is tRNA(Sec) + L-serine + ATP = L-seryl-tRNA(Sec) + AMP + diphosphate + H(+). Its pathway is aminoacyl-tRNA biosynthesis; selenocysteinyl-tRNA(Sec) biosynthesis; L-seryl-tRNA(Sec) from L-serine and tRNA(Sec): step 1/1. In terms of biological role, catalyzes the attachment of serine to tRNA(Ser). Is also able to aminoacylate tRNA(Sec) with serine, to form the misacylated tRNA L-seryl-tRNA(Sec), which will be further converted into selenocysteinyl-tRNA(Sec). The chain is Serine--tRNA ligase from Clostridium perfringens (strain SM101 / Type A).